The chain runs to 231 residues: Caspase-like protein (231 aa).

Belongs to the peptidase C14A family.

The protein is Caspase-like protein of Trichoplusia ni ascovirus 2c (TnAV-2c).